The primary structure comprises 129 residues: Small ribosomal subunit protein uS11 (129 aa).

It belongs to the universal ribosomal protein uS11 family. Part of the 30S ribosomal subunit. Interacts with proteins S7 and S18. Binds to IF-3.

Located on the platform of the 30S subunit, it bridges several disparate RNA helices of the 16S rRNA. Forms part of the Shine-Dalgarno cleft in the 70S ribosome. The protein is Small ribosomal subunit protein uS11 of Stenotrophomonas maltophilia (strain R551-3).